The primary structure comprises 96 residues: Large ribosomal subunit protein uL23 (96 aa).

This sequence belongs to the universal ribosomal protein uL23 family. In terms of assembly, part of the 50S ribosomal subunit. Contacts protein L29, and trigger factor when it is bound to the ribosome.

Functionally, one of the early assembly proteins it binds 23S rRNA. One of the proteins that surrounds the polypeptide exit tunnel on the outside of the ribosome. Forms the main docking site for trigger factor binding to the ribosome. The protein is Large ribosomal subunit protein uL23 of Alkaliphilus oremlandii (strain OhILAs) (Clostridium oremlandii (strain OhILAs)).